Here is a 284-residue protein sequence, read N- to C-terminus: Tropomyosin alpha-1 chain (284 aa).

The tract at residues 1-38 (MDAIKKKMQMLKLDKENALDRAEQAEADKKGAEDKSKQ) is disordered. The stretch at 1–284 (MDAIKKKMQM…DHALNDMTSI (284 aa)) forms a coiled coil. The segment covering 12 to 38 (KLDKENALDRAEQAEADKKGAEDKSKQ) has biased composition (basic and acidic residues).

This sequence belongs to the tropomyosin family. As to quaternary structure, homodimer. Heterodimer of an alpha (TPM1, TPM3 or TPM4) and a beta (TPM2) chain.

The protein localises to the cytoplasm. The protein resides in the cytoskeleton. Binds to actin filaments in muscle and non-muscle cells. Plays a central role, in association with the troponin complex, in the calcium dependent regulation of vertebrate striated muscle contraction. Smooth muscle contraction is regulated by interaction with caldesmon. In non-muscle cells is implicated in stabilizing cytoskeleton actin filaments. The chain is Tropomyosin alpha-1 chain (tpm1) from Xenopus laevis (African clawed frog).